Reading from the N-terminus, the 411-residue chain is Elongation factor Tu, apicoplast (411 aa).

Residues 10–214 (KPHVNIGTIG…TVDSYIEKPE (205 aa)) enclose the tr-type G domain. Residues 19-26 (GHVDHGKT) are G1. 19-26 (GHVDHGKT) serves as a coordination point for GTP. T26 provides a ligand contact to Mg(2+). The tract at residues 61–65 (GITIN) is G2. The segment at 82–85 (DCPG) is G3. GTP contacts are provided by residues 82 to 86 (DCPGH) and 137 to 140 (NKED). The interval 137 to 140 (NKED) is G4. The G5 stretch occupies residues 175 to 177 (SAL).

It belongs to the TRAFAC class translation factor GTPase superfamily. Classic translation factor GTPase family. EF-Tu/EF-1A subfamily.

It is found in the plastid. The protein resides in the apicoplast. It carries out the reaction GTP + H2O = GDP + phosphate + H(+). In terms of biological role, GTP hydrolase that promotes the GTP-dependent binding of aminoacyl-tRNA to the A-site of ribosomes during protein biosynthesis. The chain is Elongation factor Tu, apicoplast (tufA) from Theileria parva (East coast fever infection agent).